The sequence spans 279 residues: Small ribosomal subunit protein uS2 (279 aa).

The segment at 232-279 (RRRGTDEKPEAGVASDEPLAEWERELLEEPKKSDEPKSDEQPAAAAAE) is disordered. Basic and acidic residues predominate over residues 252–271 (EWERELLEEPKKSDEPKSDE).

The protein belongs to the universal ribosomal protein uS2 family.

The polypeptide is Small ribosomal subunit protein uS2 (Salinispora arenicola (strain CNS-205)).